The following is a 208-amino-acid chain: Small ribosomal subunit protein eS8 (208 aa).

The interval 1–27 is disordered; that stretch reads MGISRDNWHKRRRTGGKRKPVHKKRKY. Over residues 8 to 26 the composition is skewed to basic residues; sequence WHKRRRTGGKRKPVHKKRK.

The protein belongs to the eukaryotic ribosomal protein eS8 family. Component of the small ribosomal subunit. Identified in a IGF2BP1-dependent mRNP granule complex containing untranslated mRNAs. Part of the small subunit (SSU) processome, composed of more than 70 proteins and the RNA chaperone small nucleolar RNA (snoRNA) U3.

The protein resides in the cytoplasm. Its subcellular location is the membrane. The protein localises to the nucleus. It localises to the nucleolus. Its function is as follows. Component of the small ribosomal subunit. The ribosome is a large ribonucleoprotein complex responsible for the synthesis of proteins in the cell. Part of the small subunit (SSU) processome, first precursor of the small eukaryotic ribosomal subunit. During the assembly of the SSU processome in the nucleolus, many ribosome biogenesis factors, an RNA chaperone and ribosomal proteins associate with the nascent pre-rRNA and work in concert to generate RNA folding, modifications, rearrangements and cleavage as well as targeted degradation of pre-ribosomal RNA by the RNA exosome. The polypeptide is Small ribosomal subunit protein eS8 (rps8) (Danio rerio (Zebrafish)).